We begin with the raw amino-acid sequence, 474 residues long: Nuclear hormone receptor family member nhr-91 (474 aa).

The interval 50–69 (SMTPSFSQTESPNSETDDST) is disordered. The segment covering 51 to 69 (MTPSFSQTESPNSETDDST) has biased composition (polar residues). The nuclear receptor DNA-binding region spans 97–172 (SKLCSVCGDK…KGMLTEAVRE (76 aa)). 2 consecutive NR C4-type zinc fingers follow at residues 100 to 120 (CSVC…CEGC) and 136 to 155 (CSQD…CQSC). In terms of domain architecture, NR LBD spans 215 to 474 (SGKKLIKELV…KNPRRLVFDE (260 aa)).

The protein belongs to the nuclear hormone receptor family.

The protein localises to the nucleus. In terms of biological role, orphan nuclear receptor. This chain is Nuclear hormone receptor family member nhr-91 (nhr-91), found in Caenorhabditis elegans.